Reading from the N-terminus, the 287-residue chain is Pyridoxal kinase PdxY (287 aa).

Substrate-binding positions include S10 and 45 to 46; that span reads TQ. Residues D112, A144, E149, K182, and 209-212 contribute to the ATP site; that span reads RPLV. D224 provides a ligand contact to substrate.

It belongs to the pyridoxine kinase family. PdxY subfamily. As to quaternary structure, homodimer. Requires Mg(2+) as cofactor.

It carries out the reaction pyridoxal + ATP = pyridoxal 5'-phosphate + ADP + H(+). The protein operates within cofactor metabolism; pyridoxal 5'-phosphate salvage; pyridoxal 5'-phosphate from pyridoxal: step 1/1. Pyridoxal kinase involved in the salvage pathway of pyridoxal 5'-phosphate (PLP). Catalyzes the phosphorylation of pyridoxal to PLP. This Shigella dysenteriae serotype 1 (strain Sd197) protein is Pyridoxal kinase PdxY.